We begin with the raw amino-acid sequence, 189 residues long: GMP synthase [glutamine-hydrolyzing] subunit A (189 aa).

A Glutamine amidotransferase type-1 domain is found at 1 to 189 (MIVILNNGGQ…CKKCGFEFEE (189 aa)). Catalysis depends on cysteine 76, which acts as the Nucleophile. Active-site residues include histidine 163 and glutamate 165.

Heterodimer composed of a glutamine amidotransferase subunit (A) and a GMP-binding subunit (B).

The enzyme catalyses XMP + L-glutamine + ATP + H2O = GMP + L-glutamate + AMP + diphosphate + 2 H(+). The protein operates within purine metabolism; GMP biosynthesis; GMP from XMP (L-Gln route): step 1/1. Functionally, catalyzes the synthesis of GMP from XMP. The polypeptide is GMP synthase [glutamine-hydrolyzing] subunit A (Methanococcus maripaludis (strain C7 / ATCC BAA-1331)).